A 3059-amino-acid polypeptide reads, in one-letter code: Genome polyprotein (3059 aa).

Positions 154–298 (GVTPYSVQQL…ESTMLSTHHY (145 aa)) constitute a Peptidase S30 domain. Residues His-207, Asp-216, and Ser-249 each act as for P1 proteinase activity in the active site. The short motif at 349–352 (KITC) is the Involved in interaction with stylet and aphid transmission element. The Involved in virions binding and aphid transmission signature appears at 607-609 (PTK). The Peptidase C6 domain maps to 633–755 (MYIAKSGYCY…DSEMKHYRVG (123 aa)). Residues Cys-641 and His-714 each act as for helper component proteinase activity in the active site. Positions 1226–1378 (QIAHDLHTDI…TQYPVEIRVE (153 aa)) constitute a Helicase ATP-binding domain. 1239-1246 (GAVGSGKS) contributes to the ATP binding site. The short motif at 1328–1331 (DEFH) is the DEFH box element. The Helicase C-terminal domain maps to 1397–1556 (DLTSKCDNLL…GLPISTQSVT (160 aa)). Positions 1883-1890 (KKGKTKGK) match the Nuclear localization signal motif. At Tyr-1905 the chain carries O-(5'-phospho-RNA)-tyrosine. The 219-residue stretch at 2032 to 2250 (STSMFRGVRD…VCWGSFHLQD (219 aa)) folds into the Peptidase C4 domain. Residues His-2077, Asp-2112, and Cys-2182 each act as for nuclear inclusion protein A activity in the active site. The RdRp catalytic domain maps to 2516-2640 (WVYCDADGSQ…AIRPDMEHKL (125 aa)). Thr-3042 is modified (phosphothreonine).

The protein belongs to the potyviridae genome polyprotein family. As to quaternary structure, interacts with host eIF4E protein (via cap-binding region); this interaction mediates the translation of the VPg-viral RNA conjugates. Part of a complex that comprises VPg, RNA, host EIF4E and EIF4G; this interaction mediates the translation of the VPg-viral RNA conjugates. VPg is uridylylated by the polymerase and is covalently attached to the 5'-end of the genomic RNA. This uridylylated form acts as a nucleotide-peptide primer for the polymerase. In terms of processing, phosphorylation inhibits the RNA-binding capacity of the capsid protein. Post-translationally, potyviral RNA is expressed as two polyproteins which undergo post-translational proteolytic processing. Genome polyprotein is processed by NIa-pro, P1 and HC-pro proteinases resulting in the production of at least ten individual proteins. P3N-PIPO polyprotein is cleaved by P1 and HC-pro proteinases resulting in the production of three individual proteins. The P1 proteinase and the HC-pro cleave only their respective C-termini autocatalytically. 6K1 is essential for proper proteolytic separation of P3 from CI.

It is found in the host cytoplasmic vesicle. Its subcellular location is the host nucleus. It localises to the virion. It carries out the reaction RNA(n) + a ribonucleoside 5'-triphosphate = RNA(n+1) + diphosphate. The catalysed reaction is Hydrolyzes glutaminyl bonds, and activity is further restricted by preferences for the amino acids in P6 - P1' that vary with the species of potyvirus, e.g. Glu-Xaa-Xaa-Tyr-Xaa-Gln-|-(Ser or Gly) for the enzyme from tobacco etch virus. The natural substrate is the viral polyprotein, but other proteins and oligopeptides containing the appropriate consensus sequence are also cleaved.. It catalyses the reaction Hydrolyzes a Gly-|-Gly bond at its own C-terminus, commonly in the sequence -Tyr-Xaa-Val-Gly-|-Gly, in the processing of the potyviral polyprotein.. In terms of biological role, required for aphid transmission and also has proteolytic activity. Only cleaves a Gly-Gly dipeptide at its own C-terminus. Interacts with virions and aphid stylets. Acts as a suppressor of RNA-mediated gene silencing, also known as post-transcriptional gene silencing (PTGS), a mechanism of plant viral defense that limits the accumulation of viral RNAs. May have RNA-binding activity. Has helicase activity. It may be involved in replication. Its function is as follows. Indispensable for virus replication. Reduces the abundance of host transcripts related to jasmonic acid biosynthesis therefore altering the host defenses. In order to increase its own stability, decreases host protein degradation pathways. Functionally, indispensable for virus replication. In terms of biological role, mediates the cap-independent, EIF4E-dependent translation of viral genomic RNAs. Binds to the cap-binding site of host EIF4E and thus interferes with the host EIF4E-dependent mRNA export and translation. VPg-RNA directly binds EIF4E and is a template for transcription. Also forms trimeric complexes with EIF4E-EIF4G, which are templates for translation. Has RNA-binding and proteolytic activities. Its function is as follows. An RNA-dependent RNA polymerase that plays an essential role in the virus replication. Functionally, involved in aphid transmission, cell-to-cell and systemis movement, encapsidation of the viral RNA and in the regulation of viral RNA amplification. This Potato virus A (PVA) protein is Genome polyprotein.